We begin with the raw amino-acid sequence, 1198 residues long: Fibronectin type-III domain-containing protein 3a (1198 aa).

Residues 189 to 201 (KLKDRHGTQKDKL) show a composition bias toward basic and acidic residues. Residues 189–256 (KLKDRHGTQK…SQTDVEIEEK (68 aa)) form a disordered region. Residues 229–247 (GISTGSTKSKSVGKGKSNS) are compositionally biased toward low complexity. Fibronectin type-III domains are found at residues 269–370 (NIAK…TMSC), 374–466 (APNL…TSGT), 470–563 (TPAS…TCPD), 567–661 (APSK…TPAV), 665–758 (PCQP…TAPG), 762–852 (QCKP…TPAS), 864–951 (SEDE…TKPL), 952–1045 (PPDP…TPKS), and 1046–1151 (VPAA…TEPP). The interval 553–574 (SETVDYTTCPDKPGAPSKPSVK) is disordered. Residues 1172 to 1192 (VCAAVILALFAIFSILIAVII) traverse the membrane as a helical segment.

This sequence belongs to the FNDC3 family.

It is found in the golgi apparatus membrane. The chain is Fibronectin type-III domain-containing protein 3a (FNDC3A) from Gallus gallus (Chicken).